Consider the following 723-residue polypeptide: MAMFSHRLRRIVVAAPSYFQRFSTLSRPSDFTPVPSLLPRSVVKQSTAINRSPARLFSTTQYQYDPYTGEDSFMPDNEGCDFNHWLITMNFPKDNLPSREEMISIFEQTCAKGLAISLEEAKKKIYAICTTSYQGFQATMTIGEVEKFRDLPGVQYIIPDSYIDVENKVYGGDKYENGVITPGPVPVPTKEGFDSLKKESKPEQEEAEIILTPPDEGKTSGQVQGQGSLTLPDQRSVKERQGTLALVQGQGQRSGMSILGQGQGEGRRMSIPGQWQSRGQGNSFQGSFKQSQGTLPVRKGQTQISDEIPSFQGNVKQRQEMPIHGQGQAQRSQMPSSQGTLRQGQAQGSQRPSNQVGYNQGQGAQTPPYHQGQGAQTPPYQESPNNYGQGAFVQYNQGPPQGNVVQTTQEKYNQMGQGNYAPQSGGNYSPAQGAGSPRFGYGQGQGGQLLSPYRGNYNQGQGTPLPGQGQEGQPSYQMGFSQGLGAPVPPNQVIPGNYGQWAFVNYNQGPPQGNFLQGPQQNHNQGGQWNYSPQNGGHYGPAQFGQWYPGPPQGQGIQWPQYQLSYNQGQGTPFSGQCRCPNCGMTSYQGYNNQGQGTHIPEQWEGQDYAVLSYQASYNQAHGAQAPPYHGNYNQATPGGYGQGTSANFNQRFPVNPANYNMQNGGNYGPPHGLAGNPGFRQGFSGQGQNQTFQQDDQRNVAGDLRNNNPVDPTETRKPNSRI.

A mitochondrion-targeting transit peptide spans 1–64; the sequence is MAMFSHRLRR…RLFSTTQYQY (64 aa). Disordered stretches follow at residues 180–303, 318–474, and 663–723; these read ITPG…GQTQ, RQEM…EGQP, and QNGG…NSRI. Positions 191–204 are enriched in basic and acidic residues; it reads EGFDSLKKESKPEQ. 4 stretches are compositionally biased toward polar residues: residues 219–233, 273–303, 327–365, and 373–430; these read TSGQ…TLPD, GQWQ…GQTQ, GQAQ…QGAQ, and QGAQ…NYSP. 2 stretches are compositionally biased toward low complexity: residues 459 to 474 and 682 to 695; these read QGQG…EGQP and QGFS…TFQQ. Residues 714–723 show a composition bias toward basic and acidic residues; sequence TETRKPNSRI.

It belongs to the MORF family. Heterodimers with MORF8/RIP1, MORF1/RIP8 and MORF3/RIP3.

It is found in the mitochondrion. Its function is as follows. Involved in organellar RNA editing. Required for the processing of few RNA editing site in mitochondria. This is Multiple organellar RNA editing factor 4, mitochondrial from Arabidopsis thaliana (Mouse-ear cress).